The sequence spans 391 residues: uncharacterized protein (391 aa).

Helical transmembrane passes span Leu-15–Leu-35, Phe-48–Phe-68, Ile-81–Ile-101, Ile-139–Ala-159, Ile-167–Pro-187, Phe-217–Tyr-237, Ile-251–Phe-271, Phe-275–Phe-295, Ile-303–Phe-323, Thr-346–Phe-366, and Asn-369–Cys-389.

This sequence belongs to the major facilitator superfamily.

It localises to the cell membrane. This is an uncharacterized protein from Buchnera aphidicola subsp. Schizaphis graminum (strain Sg).